We begin with the raw amino-acid sequence, 72 residues long: Alpha-mammal toxin Bot3 (72 aa).

The N-terminal stretch at 1–8 (LVMAGVES) is a signal peptide. The LCN-type CS-alpha/beta domain occupies 10–72 (KDGYIVDDRN…VRTKGPGRCN (63 aa)). 4 disulfides stabilise this stretch: cysteine 20–cysteine 71, cysteine 24–cysteine 44, cysteine 30–cysteine 54, and cysteine 34–cysteine 56. At asparagine 72 the chain carries Asparagine amide.

The protein belongs to the long (4 C-C) scorpion toxin superfamily. Sodium channel inhibitor family. Alpha subfamily. Post-translationally, when the toxin is not amidated, there are 75% loss of toxicity to mice, and total incapacity to bind rat brain synaptosomes. As to expression, expressed by the venom gland.

It localises to the secreted. In terms of biological role, alpha toxins bind voltage-independently at site-3 of sodium channels (Nav) and inhibit the inactivation of the activated channels, thereby blocking neuronal transmission. Is active against mammals and binds with high affinity to rat brain synaptosomes. This chain is Alpha-mammal toxin Bot3, found in Buthus occitanus tunetanus (Common European scorpion).